Consider the following 434-residue polypeptide: Protein ENHANCED PSEUDOMONAS SUSCEPTIBILITY 1 (434 aa).

D376 (proton acceptor) is an active-site residue.

Belongs to the plant acyltransferase family.

In terms of biological role, required for pathogen-induced salicylic acid (SA) accumulation and SA-mediated resistance to virulent and avirulent pathogens (e.g. P.syringae). The protein is Protein ENHANCED PSEUDOMONAS SUSCEPTIBILITY 1 of Arabidopsis thaliana (Mouse-ear cress).